The chain runs to 757 residues: Inhibitor of nuclear factor kappa-B kinase subunit beta (757 aa).

One can recognise a Protein kinase domain in the interval 15–300 (WEMKERLGTG…DPQYGPNGCF (286 aa)). ATP is bound by residues 21–29 (LGTGGFGNV) and K44. Catalysis depends on D145, which acts as the Proton acceptor. K163 is covalently cross-linked (Glycyl lysine isopeptide (Lys-Gly) (interchain with G-Cter in ubiquitin)). S177 is modified (phosphoserine; by TBK1 and PKC/PRKCZ). Position 179 is an S-nitrosocysteine (C179). S181 is modified (phosphoserine; by TBK1, PKC/PRKCZ and PDPK1). Hydroxyproline is present on P191. The interval 458–479 (LLRNNSCLSKMKNAMASTAQQL) is leucine-zipper. S670 carries the post-translational modification Phosphoserine; by autocatalysis. S672 is modified (phosphoserine). Residues S675, S682, S689, S692, S697, S705, S733, and S740 each carry the phosphoserine; by autocatalysis modification. Positions 683 to 703 (HPGQLMSQPSSACDSLPESDK) are disordered. An NEMO-binding region spans residues 737 to 742 (LDWSWL).

This sequence belongs to the protein kinase superfamily. Ser/Thr protein kinase family. I-kappa-B kinase subfamily. Component of the I-kappa-B-kinase (IKK) core complex consisting of CHUK, IKBKB and IKBKG; probably four alpha/CHUK-beta/IKBKB dimers are associated with four gamma/IKBKG subunits. The IKK core complex seems to associate with regulatory or adapter proteins to form a IKK-signalosome holo-complex. The IKK complex associates with TERF2IP/RAP1, leading to promote IKK-mediated phosphorylation of RELA/p65. Part of a complex composed of NCOA2, NCOA3, CHUK/IKKA, IKBKB, IKBKG and CREBBP. Part of a 70-90 kDa complex at least consisting of CHUK/IKKA, IKBKB, NFKBIA, RELA, ELP1 and MAP3K14. Found in a membrane raft complex, at least composed of BCL10, CARD11, DPP4 and IKBKB. Interacts with SQSTM1 through PRKCZ or PRKCI. Forms an NGF-induced complex with IKBKB, PRKCI and TRAF6. May interact with MAVS/IPS1. Interacts with NALP2. Interacts with TICAM1. Interacts with FAF1; the interaction disrupts the IKK complex formation. Interacts with ATM. Part of a ternary complex consisting of TANK, IKBKB and IKBKG. Interacts with NIBP; the interaction is direct. Interacts with ARRB1 and ARRB2. Interacts with TRIM21. Interacts with NLRC5; prevents IKBKB phosphorylation and kinase activity. Interacts with PDPK1. Interacts with EIF2AK2/PKR. The phosphorylated form interacts with PPM1A and PPM1B. Interacts with ZNF268 isoform 2; the interaction is further increased in a TNF-alpha-dependent manner. Interacts with IKBKE. Interacts with ZC3H12A. Interacts with AKAP13. Interacts with LRRC14; disrupts IKBKB-IKBKG interaction preventing I-kappa-B-kinase (IKK) core complex formation and leading to a decrease of IKBKB phosphorylation and NF-kappaB activation. Interacts with SASH1. Interacts with ARFIP2. Interacts with FKBP5. Interacts with kinase TBK1; the complex interacts with STAT1, leading to phosphorylation of STAT1 on 'Thr-748' by IKBKB. In terms of processing, upon cytokine stimulation, phosphorylated on Ser-177 and Ser-181 by MEKK1 and/or MAP3K14/NIK as well as TBK1 and PRKCZ; which enhances activity. Phosphorylated by MAP3K7/TAK1 in response to NOD1 and NOD2 signaling, promoting activation and phosphorylation of NF-kappa-B inhibitors, leading to NF-kappa-B activation. Once activated, autophosphorylates on the C-terminal serine cluster; which decreases activity and prevents prolonged activation of the inflammatory response. Phosphorylated by the IKK-related kinases TBK1 and IKBKE, which is associated with reduced CHUK/IKKA and IKBKB activity and NF-kappa-B-dependent gene transcription. Dephosphorylated at Ser-177 and Ser-181 by PPM1A and PPM1B. Post-translationally, ubiquitinated. Monoubiquitination involves TRIM21 that leads to inhibition of Tax-induced NF-kappa-B signaling. 'Ser-163' may not serve as a monoubiquitination site. Ubiquitination on 'Ser-163' may modulate phosphorylation on C-terminal serine residues. Hydroxylated by PHD1/EGLN2, loss of hydroxylation under hypoxic conditions results in activation of NF-kappa-B. Detected in heart (at protein level). Expressed in liver, kidney and spleen.

It is found in the cytoplasm. The protein resides in the nucleus. Its subcellular location is the membrane raft. The catalysed reaction is L-seryl-[I-kappa-B protein] + ATP = O-phospho-L-seryl-[I-kappa-B protein] + ADP + H(+). The enzyme catalyses L-seryl-[protein] + ATP = O-phospho-L-seryl-[protein] + ADP + H(+). It catalyses the reaction L-threonyl-[protein] + ATP = O-phospho-L-threonyl-[protein] + ADP + H(+). Serine kinase that plays an essential role in the NF-kappa-B signaling pathway which is activated by multiple stimuli such as inflammatory cytokines, bacterial or viral products, DNA damages or other cellular stresses. Acts as a part of the canonical IKK complex in the conventional pathway of NF-kappa-B activation. Phosphorylates inhibitors of NF-kappa-B on 2 critical serine residues. These modifications allow polyubiquitination of the inhibitors and subsequent degradation by the proteasome. In turn, free NF-kappa-B is translocated into the nucleus and activates the transcription of hundreds of genes involved in immune response, growth control, or protection against apoptosis. In addition to the NF-kappa-B inhibitors, phosphorylates several other components of the signaling pathway including NEMO/IKBKG, NF-kappa-B subunits RELA and NFKB1, as well as IKK-related kinases TBK1 and IKBKE. IKK-related kinase phosphorylations may prevent the overproduction of inflammatory mediators since they exert a negative regulation on canonical IKKs. Phosphorylates FOXO3, mediating the TNF-dependent inactivation of this pro-apoptotic transcription factor. Also phosphorylates other substrates including NAA10, NCOA3, BCL10 and IRS1. Phosphorylates RIPK1 at 'Ser-25' which represses its kinase activity and consequently prevents TNF-mediated RIPK1-dependent cell death. Phosphorylates the C-terminus of IRF5, stimulating IRF5 homodimerization and translocation into the nucleus. Following bacterial lipopolysaccharide (LPS)-induced TLR4 endocytosis, phosphorylates STAT1 at 'Thr-748' which restricts interferon signaling and anti-inflammatory responses and promotes innate inflammatory responses. IKBKB-mediated phosphorylation of STAT1 at 'Thr-748' promotes binding of STAT1 to the ARID5A promoter, resulting in transcriptional activation of ARID5A and subsequent ARID5A-mediated stabilization of IL6. It also promotes binding of STAT1 to the IL12B promoter and activation of IL12B transcription. This is Inhibitor of nuclear factor kappa-B kinase subunit beta (Ikbkb) from Mus musculus (Mouse).